A 256-amino-acid chain; its full sequence is Thiazole synthase (256 aa).

K95 functions as the Schiff-base intermediate with DXP in the catalytic mechanism. Residues G156, 182-183 (AG), and 204-205 (NT) each bind 1-deoxy-D-xylulose 5-phosphate.

It belongs to the ThiG family. As to quaternary structure, homotetramer. Forms heterodimers with either ThiH or ThiS.

The protein localises to the cytoplasm. It carries out the reaction [ThiS sulfur-carrier protein]-C-terminal-Gly-aminoethanethioate + 2-iminoacetate + 1-deoxy-D-xylulose 5-phosphate = [ThiS sulfur-carrier protein]-C-terminal Gly-Gly + 2-[(2R,5Z)-2-carboxy-4-methylthiazol-5(2H)-ylidene]ethyl phosphate + 2 H2O + H(+). Its pathway is cofactor biosynthesis; thiamine diphosphate biosynthesis. Functionally, catalyzes the rearrangement of 1-deoxy-D-xylulose 5-phosphate (DXP) to produce the thiazole phosphate moiety of thiamine. Sulfur is provided by the thiocarboxylate moiety of the carrier protein ThiS. In vitro, sulfur can be provided by H(2)S. The chain is Thiazole synthase from Salmonella paratyphi A (strain ATCC 9150 / SARB42).